The following is a 134-amino-acid chain: T-cell receptor alpha chain V region RL-5 (134 aa).

The first 20 residues, M1–T20, serve as a signal peptide directing secretion. The interval N21–R114 is v segment. Residues R115 to N134 are j segment. N-linked (GlcNAc...) asparagine glycosylation occurs at N134.

Rearrangement with the C region would elongate the sequence with Ile-Thr-; which creates a potential N-glycosylation site at Asn-134.

The protein is T-cell receptor alpha chain V region RL-5 of Oryctolagus cuniculus (Rabbit).